The primary structure comprises 186 residues: Ribosome-recycling factor (186 aa).

It belongs to the RRF family.

It localises to the cytoplasm. Its function is as follows. Responsible for the release of ribosomes from messenger RNA at the termination of protein biosynthesis. May increase the efficiency of translation by recycling ribosomes from one round of translation to another. The sequence is that of Ribosome-recycling factor from Chlorobium phaeobacteroides (strain BS1).